A 259-amino-acid polypeptide reads, in one-letter code: Dickkopf-related protein 2 (259 aa).

An N-terminal signal peptide occupies residues 1 to 33 (MAALMRSKDSSCCLLLLAAVLMVESSQIGSSRA). The N-linked (GlcNAc...) asparagine glycan is linked to Asn52. The DKK-type Cys-1 stretch occupies residues 78–127 (CSSDKECEVGRYCHSPHQGSSACMVCRRKKKRCHRDGMCCPSTRCNNGIC). 5 disulfides stabilise this stretch: Cys183/Cys195, Cys189/Cys204, Cys194/Cys231, Cys214/Cys239, and Cys233/Cys256. The interval 183–256 (CLRSSDCIEG…YSSKARLHVC (74 aa)) is DKK-type Cys-2.

The protein belongs to the dickkopf family. As to quaternary structure, interacts with LRP5 and LRP6. May be proteolytically processed by a furin-like protease. In terms of tissue distribution, expressed in heart, brain, skeletal muscle and lung.

It localises to the secreted. Antagonizes canonical Wnt signaling by inhibiting LRP5/6 interaction with Wnt and by forming a ternary complex with the transmembrane protein KREMEN that promotes internalization of LRP5/6. DKKs play an important role in vertebrate development, where they locally inhibit Wnt regulated processes such as antero-posterior axial patterning, limb development, somitogenesis and eye formation. In the adult, Dkks are implicated in bone formation and bone disease, cancer and Alzheimer disease. The protein is Dickkopf-related protein 2 (DKK2) of Homo sapiens (Human).